An 82-amino-acid chain; its full sequence is Small ribosomal subunit protein eS17 (82 aa).

This sequence belongs to the eukaryotic ribosomal protein eS17 family.

This Sulfolobus acidocaldarius (strain ATCC 33909 / DSM 639 / JCM 8929 / NBRC 15157 / NCIMB 11770) protein is Small ribosomal subunit protein eS17.